A 453-amino-acid chain; its full sequence is DNA repair protein RadA (453 aa).

A C4-type zinc finger spans residues 10–27 (CTECGATFPKWAGQCADC). 96 to 103 (GDPGIGKS) serves as a coordination point for ATP. The RadA KNRFG motif motif lies at 252-256 (KNRFG). A lon-protease-like region spans residues 351–453 (DVFLNVVGGV…LEQALDALFE (103 aa)).

The protein belongs to the RecA family. RadA subfamily.

DNA-dependent ATPase involved in processing of recombination intermediates, plays a role in repairing DNA breaks. Stimulates the branch migration of RecA-mediated strand transfer reactions, allowing the 3' invading strand to extend heteroduplex DNA faster. Binds ssDNA in the presence of ADP but not other nucleotides, has ATPase activity that is stimulated by ssDNA and various branched DNA structures, but inhibited by SSB. Does not have RecA's homology-searching function. This is DNA repair protein RadA from Pseudomonas aeruginosa (strain ATCC 15692 / DSM 22644 / CIP 104116 / JCM 14847 / LMG 12228 / 1C / PRS 101 / PAO1).